Here is a 190-residue protein sequence, read N- to C-terminus: Cypemycin cysteine dehydrogenase (decarboxylating) (190 aa).

It belongs to the HFCD (homooligomeric flavin containing Cys decarboxylase) superfamily.

It catalyses the reaction [cypemycin](1-18)-L-Cys-L-Leu-L-Val-L-Cys + A = C(3,19),S(21)-[cypemycin](1-18)-L-Ala-L-Leu-N-thioethenyl-L-valinamide + hydrogen sulfide + AH2 + CO2. Involved in the biosynthesis of the lanaridin cypemycin. This Streptomyces sp protein is Cypemycin cysteine dehydrogenase (decarboxylating).